Reading from the N-terminus, the 156-residue chain is Ribosome maturation factor RimP (156 aa).

Belongs to the RimP family.

It is found in the cytoplasm. Its function is as follows. Required for maturation of 30S ribosomal subunits. The chain is Ribosome maturation factor RimP from Bacillus cereus (strain B4264).